The sequence spans 71 residues: Glucose-repressible gene protein (71 aa).

Positions 19-71 (TATASKEANKDVAKDSNQGVGTRLNAAGDAISDKVSENKHDAKAEAHKQGATH) are disordered. A compositionally biased stretch (basic and acidic residues) spans 49-71 (ISDKVSENKHDAKAEAHKQGATH).

The chain is Glucose-repressible gene protein (grg-1) from Neurospora crassa (strain ATCC 24698 / 74-OR23-1A / CBS 708.71 / DSM 1257 / FGSC 987).